The sequence spans 702 residues: Elongation factor G (702 aa).

The 283-residue stretch at 8-290 folds into the tr-type G domain; that stretch reads ERYRNIGISA…AVIEYLPAPT (283 aa). Residues 17–24, 88–92, and 142–145 contribute to the GTP site; these read AHIDAGKT, DTPGH, and NKMD.

It belongs to the TRAFAC class translation factor GTPase superfamily. Classic translation factor GTPase family. EF-G/EF-2 subfamily.

It is found in the cytoplasm. In terms of biological role, catalyzes the GTP-dependent ribosomal translocation step during translation elongation. During this step, the ribosome changes from the pre-translocational (PRE) to the post-translocational (POST) state as the newly formed A-site-bound peptidyl-tRNA and P-site-bound deacylated tRNA move to the P and E sites, respectively. Catalyzes the coordinated movement of the two tRNA molecules, the mRNA and conformational changes in the ribosome. This Yersinia pseudotuberculosis serotype O:1b (strain IP 31758) protein is Elongation factor G.